The primary structure comprises 946 residues: MEYNFREIEKKWHDYWIAEKVYKVEKDTNKPKYYVLDMFPYPSGAGLHVGHPLGYIASDIYSRFKRLQGFNVLHPMGYDAYGLPAEQYAIQTGQHPEITTKNNIARYREQLEKIGFCYDWSREIRTCDPEYYKWTQWAFIRMFNSYYCNDEKQARPISELIQAFETSGTEGLNVACGEELSFTAEEWKAKSDKEKQEILLNYRIAYRGETMVNWCAALGTVLANDEVVNGVSERGGYPVEQKIMRQWCLRVSAYAQRLLDGLDTIDWTDSLKETQKNWIGRSEGAEVRFKVKDSDKEFTIFTTRADTMFGVTFMVLAPESELVQQLTTADQKAEVDAYLDRTKKRTERERIADRQVTGVFSGSYAINPFTGEAVPIWISDYVLAGYGTGAIMAVPAHDSRDYAFAKHFGLEIRPLVEGCDVSKESFDAKEGIVCNSPRTGVTPYCDLSLNGLTIKEAIAATKKYVKDHDLGRVKINYRLRDAIFSRQRYWGEPFPVYYDADSMPQMLPEECLPLLLPEVDKFLPTETGEPPLGHAVKWAWDTVNQKVTEVSKIDNQTIFPLELCTMPGFAGSSAYYLRYMDPHNDKALVAKDVDEYWRNVDLYIGGTEHATGHLIYSRFWNKFLFDLGIVCEEEPFKKLINQGMIQGRSNFVYRINGTNKFVSLNLKDQYEVTPIHVDVNIVSNDLLDIEAFKNWRPEYNDAEFVLEDGKYICGWAVEKMSKSMFNVVNPDMIVEKYGADTLRLYEMFLGPLEQSKPWDTNGIDGVHRFLKKLWGLFFGNTDTLQVTDAEPTADELKSLHKLIKKVTFDIEHFSYNTSISAFMICVNELTSLKCSKRAILEPLITLLAPFAPHIAEELWHQLGHDTTICDARWPKHNEEYLKEKSVVYAISFNGKARYNLELPADISKEDAEKAALNHENSAKWMEGKTVKKVIVVPGKIVNIVVG.

The 'HIGH' region signature appears at 40–51 (PYPSGAGLHVGH). A 'KMSKS' region motif is present at residues 719–723 (KMSKS). An ATP-binding site is contributed by K722.

This sequence belongs to the class-I aminoacyl-tRNA synthetase family.

It localises to the cytoplasm. The enzyme catalyses tRNA(Leu) + L-leucine + ATP = L-leucyl-tRNA(Leu) + AMP + diphosphate. This Parabacteroides distasonis (strain ATCC 8503 / DSM 20701 / CIP 104284 / JCM 5825 / NCTC 11152) protein is Leucine--tRNA ligase.